The chain runs to 129 residues: Sigma factor-binding protein Crl (129 aa).

Residues 99–119 (TQAEFHKKLVKTLRERFEISV) form an essential for activity region.

Belongs to the Crl family.

The protein localises to the cytoplasm. Functionally, binds to the sigma-S subunit of RNA polymerase, activating expression of sigma-S-regulated genes. Stimulates RNA polymerase holoenzyme formation and may bind to several other sigma factors, such as sigma-70 and sigma-32. This is Sigma factor-binding protein Crl from Vibrio cholerae serotype O1 (strain ATCC 39541 / Classical Ogawa 395 / O395).